The primary structure comprises 63 residues: Bowman-Birk type proteinase inhibitor (63 aa).

7 cysteine pairs are disulfide-bonded: Cys7-Cys60, Cys8-Cys23, Cys11-Cys56, Cys13-Cys21, Cys30-Cys37, Cys34-Cys49, and Cys39-Cys47.

In terms of assembly, monomer.

Inhibits trypsin stoichiometrically at the molar ratio of 1:2, with a dissociation constant of 4.2 nM. Does not inhibit chymotrypsin. This is Bowman-Birk type proteinase inhibitor from Lupinus albus (White lupine).